We begin with the raw amino-acid sequence, 126 residues long: Glycerol dehydrogenase small subunit (126 aa).

Helical transmembrane passes span 13–33 (WLTL…VIAG), 41–61 (GSVY…FMLM), 67–87 (AFLY…EVGF), and 92–112 (LLPR…TIPV).

It is found in the cell membrane. The enzyme catalyses glycerol + A = dihydroxyacetone + AH2. Its function is as follows. Catalyzes the oxidation of glycerol to glycerone. Also acts, more slowly, on a number of other polyols including D-sorbitol, D-arabinitol, D-mannitol, meso-erythritol, adonitol and propylene glycol. The chain is Glycerol dehydrogenase small subunit (sldB) from Gluconobacter oxydans (strain 621H) (Gluconobacter suboxydans).